The chain runs to 366 residues: 15-cis-zeta-carotene isomerase, chloroplastic (366 aa).

The N-terminal 45 residues, 1–45 (MASQLRLHLAATPPLLPHRRPHLARPLCPTLNPIRAPLPPLSRVL), are a transit peptide targeting the chloroplast. A run of 6 helical transmembrane segments spans residues 94–114 (SWAY…VLWI), 136–156 (EVVM…MASL), 171–191 (VLFA…FINH), 203–223 (GITG…FFLY), 260–280 (VIWC…AASV), and 338–358 (LPYV…PLMQ).

In terms of tissue distribution, expressed in leaves and roots, and at lower levels in embryos and endosperm.

Its subcellular location is the plastid. The protein localises to the chloroplast membrane. It carries out the reaction 9,9',15-tri-cis-zeta-carotene = 9,9'-di-cis-zeta-carotene. In terms of biological role, isomerase involved in the biosynthesis of carotenoids. Catalyzes the cis- to trans-conversion of the 15-cis-bond in 9,15,9'-tri-cis-zeta-carotene. This Zea mays (Maize) protein is 15-cis-zeta-carotene isomerase, chloroplastic.